A 149-amino-acid polypeptide reads, in one-letter code: Limonene-1,2-epoxide hydrolase (149 aa).

Asp-101 serves as the catalytic Proton donor. Asp-132 acts as the Proton acceptor in catalysis.

This sequence belongs to the limonene-1,2-epoxide hydrolase family. As to quaternary structure, monomer.

It carries out the reaction limonene 1,2-epoxide + H2O = limonene-1,2-diol. Its pathway is terpene metabolism; (4R)-limonene degradation; (1S,4R)-1-hydroxylimonen-2-one from (4R)-limonene: step 2/3. Catalyzes the conversion of limonene-1,2-epoxide to limonene-1,2-diol. Can use both the (-) and (+) isomers of limonene-1,2-epoxide as substrates and also has some activity with 1-methylcyclohexene oxide, cyclohexene oxide and indene oxide as substrates. The polypeptide is Limonene-1,2-epoxide hydrolase (limA) (Rhodococcus erythropolis (Arthrobacter picolinophilus)).